A 324-amino-acid polypeptide reads, in one-letter code: Galactosylgalactosylxylosylprotein 3-beta-glucuronosyltransferase 2 (324 aa).

The Cytoplasmic portion of the chain corresponds to 1–2 (MK). A helical; Signal-anchor for type II membrane protein transmembrane segment spans residues 3-23 (SALCNRFFILLPWILIVIIML). Residues 24-324 (DVDPRRPAPQ…YHMDTVNIEV (301 aa)) lie on the Lumenal side of the membrane. The interval 34–78 (LTSRPYFSPHTVGCGGSRVPLRRSSPGRDAAEKRNESRPQLQPEP) is disordered. The N-linked (GlcNAc...) asparagine glycan is linked to asparagine 68. Aspartate 188 contributes to the Mn(2+) binding site. Glutamate 274 acts as the Proton acceptor in catalysis. N-linked (GlcNAc...) asparagine glycosylation is present at asparagine 293.

It belongs to the glycosyltransferase 43 family. As to quaternary structure, homodimer. Mn(2+) serves as cofactor. In terms of tissue distribution, expressed in the cerebral cortex, cerebellum and whole brain.

It is found in the golgi apparatus membrane. It carries out the reaction 3-O-(beta-D-galactosyl-(1-&gt;3)-beta-D-galactosyl-(1-&gt;4)-beta-D-xylosyl)-L-seryl-[protein] + UDP-alpha-D-glucuronate = 3-O-(beta-D-GlcA-(1-&gt;3)-beta-D-Gal-(1-&gt;3)-beta-D-Gal-(1-&gt;4)-beta-D-Xyl)-L-seryl-[protein] + UDP + H(+). It participates in protein modification; protein glycosylation. Its function is as follows. Involved in the biosynthesis of L2/HNK-1 carbohydrate epitope on both glycolipids and glycoproteins. Substrates include asialo-orosomucoid (ASOR), paragloboside (lacto-N-neotetraosylceramide), Gal-beta-1,4-GlcNAc-beta-1,3-Gal-beta-1,4-Glc-pyridylamine and Gal-beta-1,3-GlcNAc-beta-1,3-Gal-beta-1,4-Glc-pyridylamine. This Rattus norvegicus (Rat) protein is Galactosylgalactosylxylosylprotein 3-beta-glucuronosyltransferase 2 (B3gat2).